The sequence spans 294 residues: 3-methyl-2-oxobutanoate hydroxymethyltransferase 1 (294 aa).

Residue Asp-55 coordinates Mg(2+). 3-methyl-2-oxobutanoate contacts are provided by residues 55–56 (DS) and Lys-123. The Proton acceptor role is filled by Glu-192.

The protein belongs to the PanB family. Homodecamer; pentamer of dimers. Mg(2+) serves as cofactor.

It localises to the cytoplasm. It catalyses the reaction 3-methyl-2-oxobutanoate + (6R)-5,10-methylene-5,6,7,8-tetrahydrofolate + H2O = 2-dehydropantoate + (6S)-5,6,7,8-tetrahydrofolate. It participates in cofactor biosynthesis; (R)-pantothenate biosynthesis; (R)-pantoate from 3-methyl-2-oxobutanoate: step 1/2. Catalyzes the reversible reaction in which hydroxymethyl group from 5,10-methylenetetrahydrofolate is transferred onto alpha-ketoisovalerate to form ketopantoate. The polypeptide is 3-methyl-2-oxobutanoate hydroxymethyltransferase 1 (Methylibium petroleiphilum (strain ATCC BAA-1232 / LMG 22953 / PM1)).